The following is a 551-amino-acid chain: Palmdelphin (551 aa).

M1 carries the N-acetylmethionine modification. Residues 12-106 (QAITDKRKIQ…LQISANEEAI (95 aa)) are a coiled coil. Residue K125 forms a Glycyl lysine isopeptide (Lys-Gly) (interchain with G-Cter in SUMO2) linkage. A Phosphoserine modification is found at S135. Residue K178 forms a Glycyl lysine isopeptide (Lys-Gly) (interchain with G-Cter in SUMO1); alternate linkage. A Glycyl lysine isopeptide (Lys-Gly) (interchain with G-Cter in SUMO2); alternate cross-link involves residue K178. A compositionally biased stretch (basic and acidic residues) spans 247-258 (ERNSKSPTEYHE). The segment at 247–266 (ERNSKSPTEYHEPVYANPFC) is disordered. At T270 the chain carries Phosphothreonine. Disordered stretches follow at residues 294–390 (LGNH…TCQE) and 451–533 (AEDN…GTED). S321 and S349 each carry phosphoserine. Residues 341–353 (HTQQKRMASPWEE) are compositionally biased toward polar residues. Basic and acidic residues predominate over residues 354-365 (SSNRQNEHEVSP). Phosphoserine occurs at positions 370, 375, 384, 385, 498, 515, and 520.

The protein belongs to the paralemmin family. In terms of assembly, interacts with GLUL. Phosphorylated. As to expression, ubiquitous. Expressed at highest levels in the heart and lung.

The protein localises to the cytoplasm. Its subcellular location is the cell projection. It localises to the dendrite. It is found in the dendritic spine. In Mus musculus (Mouse), this protein is Palmdelphin (Palmd).